Reading from the N-terminus, the 653-residue chain is Beta-galactosidase-1-like protein 3 (653 aa).

The active-site Proton donor is Glu-227. Glu-301 serves as the catalytic Nucleophile.

This sequence belongs to the glycosyl hydrolase 35 family.

This Homo sapiens (Human) protein is Beta-galactosidase-1-like protein 3 (GLB1L3).